Here is a 309-residue protein sequence, read N- to C-terminus: Coproporphyrin III ferrochelatase (309 aa).

Fe-coproporphyrin III contacts are provided by residues Y12, R29, 45-46, S53, and Y124; that span reads RY. Fe(2+) contacts are provided by H182 and E263.

It belongs to the ferrochelatase family.

It is found in the cytoplasm. It carries out the reaction Fe-coproporphyrin III + 2 H(+) = coproporphyrin III + Fe(2+). Its pathway is porphyrin-containing compound metabolism; protoheme biosynthesis. Its function is as follows. Involved in coproporphyrin-dependent heme b biosynthesis. Catalyzes the insertion of ferrous iron into coproporphyrin III to form Fe-coproporphyrin III. The polypeptide is Coproporphyrin III ferrochelatase (Listeria innocua serovar 6a (strain ATCC BAA-680 / CLIP 11262)).